The primary structure comprises 100 residues: Putative protein BCL8 (100 aa).

As to expression, expressed in prostate and testis.

The protein is Putative protein BCL8 (NBEAP1) of Homo sapiens (Human).